Here is a 264-residue protein sequence, read N- to C-terminus: S-adenosylmethionine decarboxylase proenzyme (264 aa).

Ser112 (schiff-base intermediate with substrate; via pyruvic acid) is an active-site residue. Position 112 is a pyruvic acid (Ser); by autocatalysis (Ser112). The active-site Proton acceptor; for processing activity is the His117. Cys140 functions as the Proton donor; for catalytic activity in the catalytic mechanism.

It belongs to the prokaryotic AdoMetDC family. Type 2 subfamily. Heterooctamer of four alpha and four beta chains arranged as a tetramer of alpha/beta heterodimers. Pyruvate serves as cofactor. Is synthesized initially as an inactive proenzyme. Formation of the active enzyme involves a self-maturation process in which the active site pyruvoyl group is generated from an internal serine residue via an autocatalytic post-translational modification. Two non-identical subunits are generated from the proenzyme in this reaction, and the pyruvate is formed at the N-terminus of the alpha chain, which is derived from the carboxyl end of the proenzyme. The post-translation cleavage follows an unusual pathway, termed non-hydrolytic serinolysis, in which the side chain hydroxyl group of the serine supplies its oxygen atom to form the C-terminus of the beta chain, while the remainder of the serine residue undergoes an oxidative deamination to produce ammonia and the pyruvoyl group blocking the N-terminus of the alpha chain.

It catalyses the reaction S-adenosyl-L-methionine + H(+) = S-adenosyl 3-(methylsulfanyl)propylamine + CO2. It participates in amine and polyamine biosynthesis; S-adenosylmethioninamine biosynthesis; S-adenosylmethioninamine from S-adenosyl-L-methionine: step 1/1. In terms of biological role, catalyzes the decarboxylation of S-adenosylmethionine to S-adenosylmethioninamine (dcAdoMet), the propylamine donor required for the synthesis of the polyamines spermine and spermidine from the diamine putrescine. In Klebsiella pneumoniae subsp. pneumoniae (strain ATCC 700721 / MGH 78578), this protein is S-adenosylmethionine decarboxylase proenzyme.